A 292-amino-acid chain; its full sequence is DSC E3 ubiquitin ligase complex subunit 3 (292 aa).

The Extracellular segment spans residues 1–243 (MSAEPLLPTH…PIANIKHNKD (243 aa)). 5 N-linked (GlcNAc...) asparagine glycosylation sites follow: Asn11, Asn41, Asn77, Asn99, and Asn145. Residues 244–264 (LLLGICVGFFFGVFGILLMKF) form a helical membrane-spanning segment. Over 265 to 273 (DGLFNRRQK) the chain is Cytoplasmic. A helical transmembrane segment spans residues 274 to 291 (MAIFAGVIVNVMFCLVRG). A topological domain (extracellular) is located at residue Phe292.

Belongs to the dsc3 family. As to quaternary structure, component of the DSC E3 ligase complexes composed of at least TUL1, DSC2, DSC3, UBX3, CDC48 as well as VLD1 for the vacuole-localized complex or GLD1 for the Golgi/endosome-localized complex.

The protein resides in the endoplasmic reticulum membrane. Functionally, component of the DSC E3 ubiquitin ligase complexes that tag proteins present in Golgi, endosome and vacuole membranes and function in protein homeostasis under non-stress conditions and support a role in protein quality control. Involved in endocytic protein trafficking. This chain is DSC E3 ubiquitin ligase complex subunit 3, found in Saccharomyces cerevisiae (strain ATCC 204508 / S288c) (Baker's yeast).